The sequence spans 132 residues: Small ribosomal subunit protein uS11 (132 aa).

The protein belongs to the universal ribosomal protein uS11 family. In terms of assembly, part of the 30S ribosomal subunit.

Located on the platform of the 30S subunit. This chain is Small ribosomal subunit protein uS11, found in Saccharolobus solfataricus (strain ATCC 35092 / DSM 1617 / JCM 11322 / P2) (Sulfolobus solfataricus).